Consider the following 113-residue polypeptide: UPF0342 protein SZO_10960 (113 aa).

Belongs to the UPF0342 family.

The protein is UPF0342 protein SZO_10960 of Streptococcus equi subsp. zooepidemicus (strain H70).